The chain runs to 129 residues: Lysozyme C-1 (129 aa).

In terms of domain architecture, C-type lysozyme spans Lys-1–Leu-129. Disulfide bonds link Cys-6–Cys-127, Cys-30–Cys-115, Cys-65–Cys-81, and Cys-77–Cys-95. Residues Glu-35 and Asp-53 contribute to the active site.

This sequence belongs to the glycosyl hydrolase 22 family. In terms of assembly, monomer.

It catalyses the reaction Hydrolysis of (1-&gt;4)-beta-linkages between N-acetylmuramic acid and N-acetyl-D-glucosamine residues in a peptidoglycan and between N-acetyl-D-glucosamine residues in chitodextrins.. Functionally, lysozymes have primarily a bacteriolytic function; those in tissues and body fluids are associated with the monocyte-macrophage system and enhance the activity of immunoagents. The sequence is that of Lysozyme C-1 from Capra hircus (Goat).